The chain runs to 61 residues: UPF0312 protein (61 aa).

The protein belongs to the UPF0312 family.

The chain is UPF0312 protein from Delftia acidovorans (Pseudomonas acidovorans).